Consider the following 462-residue polypeptide: Nuclear factor interleukin-3-regulated protein (462 aa).

A disordered region spans residues M1–S22. K24 is covalently cross-linked (Glycyl lysine isopeptide (Lys-Gly) (interchain with G-Cter in SUMO2)). Residues D73–Q136 form the bZIP domain. The tract at residues K79–R95 is basic motif. The segment at L99–I106 is leucine-zipper. The tract at residues S188–K214 is disordered. Residue K214 forms a Glycyl lysine isopeptide (Lys-Gly) (interchain with G-Cter in SUMO2) linkage. A Glycyl lysine isopeptide (Lys-Gly) (interchain with G-Cter in SUMO1); alternate cross-link involves residue K219. K219 participates in a covalent cross-link: Glycyl lysine isopeptide (Lys-Gly) (interchain with G-Cter in SUMO2); alternate. Positions P259–P298 are disordered. The segment covering H265–T274 has biased composition (polar residues). Residues V281–D420 form a necessary for transcriptional repression and sufficient for interaction with PER2 region. S301 is subject to Phosphoserine. Glycyl lysine isopeptide (Lys-Gly) (interchain with G-Cter in SUMO2) cross-links involve residues K314, K326, K332, K337, and K350. Residue S353 is modified to Phosphoserine. Glycyl lysine isopeptide (Lys-Gly) (interchain with G-Cter in SUMO2) cross-links involve residues K360, K394, K401, K406, K412, K419, K424, K434, and K448.

It belongs to the bZIP family. NFIL3 subfamily. Homodimer. Binds DNA as a dimer. Interacts with DR1. Interacts with PER2 and CRY2. Interacts with NR0B2. Interacts with NR1D1. Interacts with MYSM1. Expressed in suprachiasmatic nucleus and liver (at protein level). Expressed in suprachiasmatic nucleus, hippocampus, gyrus dentatus, piriform cortex, internal granular layer of olfactory bulb, dorsomedial hypothalamic nucleus, pontine nuclei, granular layer of cerebellum, liver and calvariae osteoblasts. Expressed in natural killer cell precursors in bone marrow.

The protein localises to the nucleus. Functionally, acts as a transcriptional regulator that recognizes and binds to the sequence 5'-[GA]TTA[CT]GTAA[CT]-3', a sequence present in many cellular and viral promoters. Represses transcription from promoters with activating transcription factor (ATF) sites. Represses promoter activity in osteoblasts. Represses transcriptional activity of PER1. Represses transcriptional activity of PER2 via the B-site on the promoter. Activates transcription from the interleukin-3 promoter in T-cells. Competes for the same consensus-binding site with PAR DNA-binding factors (DBP, HLF and TEF). Component of the circadian clock that acts as a negative regulator for the circadian expression of PER2 oscillation in the cell-autonomous core clock. Protects pro-B cells from programmed cell death. Represses the transcription of CYP2A5. Positively regulates the expression and activity of CES2 by antagonizing the repressive action of NR1D1 on CES2. Required for the development of natural killer cell precursors. This chain is Nuclear factor interleukin-3-regulated protein (Nfil3), found in Mus musculus (Mouse).